Consider the following 257-residue polypeptide: Ribosomal RNA small subunit methyltransferase A (257 aa).

S-adenosyl-L-methionine contacts are provided by Asn-12, Leu-14, Gly-39, Glu-60, Asp-85, and Asn-105.

The protein belongs to the class I-like SAM-binding methyltransferase superfamily. rRNA adenine N(6)-methyltransferase family. RsmA subfamily.

Its subcellular location is the cytoplasm. It carries out the reaction adenosine(1518)/adenosine(1519) in 16S rRNA + 4 S-adenosyl-L-methionine = N(6)-dimethyladenosine(1518)/N(6)-dimethyladenosine(1519) in 16S rRNA + 4 S-adenosyl-L-homocysteine + 4 H(+). Functionally, specifically dimethylates two adjacent adenosines (A1518 and A1519) in the loop of a conserved hairpin near the 3'-end of 16S rRNA in the 30S particle. May play a critical role in biogenesis of 30S subunits. This is Ribosomal RNA small subunit methyltransferase A from Methylococcus capsulatus (strain ATCC 33009 / NCIMB 11132 / Bath).